The chain runs to 167 residues: Small ribosomal subunit protein uS3m (167 aa).

Residues methionine 1 to phenylalanine 35 constitute a mitochondrion transit peptide.

The protein belongs to the universal ribosomal protein uS3 family. Component of the mitochondrial ribosome small subunit (28S) which comprises a 12S rRNA and about 30 distinct proteins.

It localises to the mitochondrion. This chain is Small ribosomal subunit protein uS3m (MRPS24), found in Bos taurus (Bovine).